We begin with the raw amino-acid sequence, 132 residues long: Ribonuclease P protein component (132 aa).

It belongs to the RnpA family. Consists of a catalytic RNA component (M1 or rnpB) and a protein subunit.

The enzyme catalyses Endonucleolytic cleavage of RNA, removing 5'-extranucleotides from tRNA precursor.. RNaseP catalyzes the removal of the 5'-leader sequence from pre-tRNA to produce the mature 5'-terminus. It can also cleave other RNA substrates such as 4.5S RNA. The protein component plays an auxiliary but essential role in vivo by binding to the 5'-leader sequence and broadening the substrate specificity of the ribozyme. The protein is Ribonuclease P protein component of Marinobacter nauticus (strain ATCC 700491 / DSM 11845 / VT8) (Marinobacter aquaeolei).